The sequence spans 86 residues: Progonadoliberin-2 (86 aa).

Positions 1 to 24 (MVHICRLLVLMGMLLCLSAQFASS) are cleaved as a signal peptide. At glutamine 25 the chain carries Pyrrolidone carboxylic acid. Position 34 is a glycine amide (glycine 34).

It belongs to the GnRH family.

The protein resides in the secreted. In terms of biological role, stimulates the secretion of gonadotropins. This chain is Progonadoliberin-2 (gnrh2), found in Rutilus rutilus (Roach).